Reading from the N-terminus, the 474-residue chain is Bifunctional protein HldE (474 aa).

Residues 1 to 318 (MKLSMPRFDQ…RAVQREQGSE (318 aa)) are ribokinase. 194–197 (NLSE) contributes to the ATP binding site. Aspartate 263 is an active-site residue. The cytidylyltransferase stretch occupies residues 343–474 (FTNGCFDILH…AIVEKIRQKG (132 aa)).

In the N-terminal section; belongs to the carbohydrate kinase PfkB family. This sequence in the C-terminal section; belongs to the cytidylyltransferase family. As to quaternary structure, homodimer.

It carries out the reaction D-glycero-beta-D-manno-heptose 7-phosphate + ATP = D-glycero-beta-D-manno-heptose 1,7-bisphosphate + ADP + H(+). The enzyme catalyses D-glycero-beta-D-manno-heptose 1-phosphate + ATP + H(+) = ADP-D-glycero-beta-D-manno-heptose + diphosphate. Its pathway is nucleotide-sugar biosynthesis; ADP-L-glycero-beta-D-manno-heptose biosynthesis; ADP-L-glycero-beta-D-manno-heptose from D-glycero-beta-D-manno-heptose 7-phosphate: step 1/4. It functions in the pathway nucleotide-sugar biosynthesis; ADP-L-glycero-beta-D-manno-heptose biosynthesis; ADP-L-glycero-beta-D-manno-heptose from D-glycero-beta-D-manno-heptose 7-phosphate: step 3/4. In terms of biological role, catalyzes the phosphorylation of D-glycero-D-manno-heptose 7-phosphate at the C-1 position to selectively form D-glycero-beta-D-manno-heptose-1,7-bisphosphate. Its function is as follows. Catalyzes the ADP transfer from ATP to D-glycero-beta-D-manno-heptose 1-phosphate, yielding ADP-D-glycero-beta-D-manno-heptose. This chain is Bifunctional protein HldE, found in Pseudomonas paraeruginosa (strain DSM 24068 / PA7) (Pseudomonas aeruginosa (strain PA7)).